A 740-amino-acid chain; its full sequence is Polyribonucleotide nucleotidyltransferase (740 aa).

Aspartate 492 and aspartate 498 together coordinate Mg(2+). The 60-residue stretch at 559-618 (PMVQTLEIQKEKIRDVIGLGGKVIKELCKTFDVEIDISENGEVKVWGNVGENVKKAVQSI) folds into the KH domain. Residues 628 to 696 (GDIFDGEVVK…HKNRVKLTLR (69 aa)) enclose the S1 motif domain.

This sequence belongs to the polyribonucleotide nucleotidyltransferase family. It depends on Mg(2+) as a cofactor.

The protein resides in the cytoplasm. It carries out the reaction RNA(n+1) + phosphate = RNA(n) + a ribonucleoside 5'-diphosphate. In terms of biological role, involved in mRNA degradation. Catalyzes the phosphorolysis of single-stranded polyribonucleotides processively in the 3'- to 5'-direction. The sequence is that of Polyribonucleotide nucleotidyltransferase from Orientia tsutsugamushi (strain Boryong) (Rickettsia tsutsugamushi).